Here is a 147-residue protein sequence, read N- to C-terminus: Hemoglobin subunit beta (147 aa).

Position 2 is an N-acetylvaline (Val2). The region spanning 3-147 is the Globin domain; sequence HLTGEEKAAV…VANALAHKYH (145 aa). At Thr13 the chain carries Phosphothreonine. Ser45 carries the phosphoserine modification. Lys60 carries the N6-acetyllysine modification. A heme b-binding site is contributed by His64. Lys83 carries the N6-acetyllysine modification. His93 contributes to the heme b binding site. S-nitrosocysteine is present on Cys94. Lys145 is modified (N6-acetyllysine).

It belongs to the globin family. As to quaternary structure, heterotetramer of two alpha chains and two beta chains. In terms of tissue distribution, red blood cells.

Involved in oxygen transport from the lung to the various peripheral tissues. The polypeptide is Hemoglobin subunit beta (HBB) (Aotus azarae (Azara's night monkey)).